The sequence spans 357 residues: Ribosomal RNA small subunit methyltransferase C (357 aa).

Belongs to the methyltransferase superfamily. RsmC family. Monomer.

Its subcellular location is the cytoplasm. It catalyses the reaction guanosine(1207) in 16S rRNA + S-adenosyl-L-methionine = N(2)-methylguanosine(1207) in 16S rRNA + S-adenosyl-L-homocysteine + H(+). Its function is as follows. Specifically methylates the guanine in position 1207 of 16S rRNA in the 30S particle. In Colwellia psychrerythraea (strain 34H / ATCC BAA-681) (Vibrio psychroerythus), this protein is Ribosomal RNA small subunit methyltransferase C.